The sequence spans 384 residues: Probable L-tyrosine/L-aspartate decarboxylase (384 aa).

Position 233 is an N6-(pyridoxal phosphate)lysine (K233).

It belongs to the group II decarboxylase family. MfnA subfamily. The cofactor is pyridoxal 5'-phosphate.

The catalysed reaction is L-tyrosine + H(+) = tyramine + CO2. It catalyses the reaction L-aspartate + H(+) = beta-alanine + CO2. It functions in the pathway cofactor biosynthesis; methanofuran biosynthesis. Its pathway is cofactor biosynthesis; coenzyme A biosynthesis. Functionally, catalyzes the decarboxylation of L-tyrosine to produce tyramine for methanofuran biosynthesis. Can also catalyze the decarboxylation of L-aspartate to produce beta-alanine for coenzyme A (CoA) biosynthesis. The polypeptide is Probable L-tyrosine/L-aspartate decarboxylase (Methanococcus maripaludis (strain C5 / ATCC BAA-1333)).